Here is a 256-residue protein sequence, read N- to C-terminus: Imidazole glycerol phosphate synthase subunit HisF (256 aa).

Catalysis depends on residues Asp12 and Asp131.

Belongs to the HisA/HisF family. As to quaternary structure, heterodimer of HisH and HisF.

Its subcellular location is the cytoplasm. It catalyses the reaction 5-[(5-phospho-1-deoxy-D-ribulos-1-ylimino)methylamino]-1-(5-phospho-beta-D-ribosyl)imidazole-4-carboxamide + L-glutamine = D-erythro-1-(imidazol-4-yl)glycerol 3-phosphate + 5-amino-1-(5-phospho-beta-D-ribosyl)imidazole-4-carboxamide + L-glutamate + H(+). The protein operates within amino-acid biosynthesis; L-histidine biosynthesis; L-histidine from 5-phospho-alpha-D-ribose 1-diphosphate: step 5/9. IGPS catalyzes the conversion of PRFAR and glutamine to IGP, AICAR and glutamate. The HisF subunit catalyzes the cyclization activity that produces IGP and AICAR from PRFAR using the ammonia provided by the HisH subunit. This chain is Imidazole glycerol phosphate synthase subunit HisF, found in Ectopseudomonas mendocina (strain ymp) (Pseudomonas mendocina).